Consider the following 345-residue polypeptide: NADH-quinone oxidoreductase subunit 8 (345 aa).

The next 8 helical transmembrane spans lie at 15–35 (MLLQ…FMVY), 82–102 (FVYF…FVVI), 115–135 (VGIL…IMGG), 161–181 (LGLI…TAIV), 190–210 (LLNW…VSAL), 240–262 (YLLF…SLLF), 278–298 (WWMV…KAIV), and 309–329 (IGWK…AILA).

It belongs to the complex I subunit 1 family. NDH-1 is composed of at least 14 different subunits, Nqo1 to Nqo14. The complex has a L-shaped structure, with the hydrophobic arm (subunits Nqo7, Nqo8, Nqo10 to Nqo14) embedded in the inner membrane and the hydrophilic peripheral arm (subunits Nqo1 to Nqo6, Nqo9) protruding into the bacterial cytoplasm. The hydrophilic domain contains all the redox centers.

The protein localises to the cell inner membrane. It carries out the reaction a quinone + NADH + 5 H(+)(in) = a quinol + NAD(+) + 4 H(+)(out). In terms of biological role, NDH-1 shuttles electrons from NADH, via FMN and iron-sulfur (Fe-S) centers, to quinones in the respiratory chain. The immediate electron acceptor for the enzyme in this species is believed to be ubiquinone. Couples the redox reaction to proton translocation (for every two electrons transferred, four hydrogen ions are translocated across the cytoplasmic membrane), and thus conserves the redox energy in a proton gradient. The polypeptide is NADH-quinone oxidoreductase subunit 8 (Paracoccus denitrificans).